A 271-amino-acid polypeptide reads, in one-letter code: Enolase-phosphatase E1 (271 aa).

Positions 16 and 18 each coordinate Mg(2+). Residues 150-151 and lysine 199 contribute to the substrate site; that span reads SS. Aspartate 226 provides a ligand contact to Mg(2+).

It belongs to the HAD-like hydrolase superfamily. MasA/MtnC family. As to quaternary structure, monomer. It depends on Mg(2+) as a cofactor.

The protein localises to the cytoplasm. The protein resides in the nucleus. The catalysed reaction is 5-methylsulfanyl-2,3-dioxopentyl phosphate + H2O = 1,2-dihydroxy-5-(methylsulfanyl)pent-1-en-3-one + phosphate. Its pathway is amino-acid biosynthesis; L-methionine biosynthesis via salvage pathway; L-methionine from S-methyl-5-thio-alpha-D-ribose 1-phosphate: step 3/6. The protein operates within amino-acid biosynthesis; L-methionine biosynthesis via salvage pathway; L-methionine from S-methyl-5-thio-alpha-D-ribose 1-phosphate: step 4/6. Bifunctional enzyme that catalyzes the enolization of 2,3-diketo-5-methylthiopentyl-1-phosphate (DK-MTP-1-P) into the intermediate 2-hydroxy-3-keto-5-methylthiopentenyl-1-phosphate (HK-MTPenyl-1-P), which is then dephosphorylated to form the acireductone 1,2-dihydroxy-3-keto-5-methylthiopentene (DHK-MTPene). In Candida dubliniensis (strain CD36 / ATCC MYA-646 / CBS 7987 / NCPF 3949 / NRRL Y-17841) (Yeast), this protein is Enolase-phosphatase E1.